Here is a 157-residue protein sequence, read N- to C-terminus: Eukaryotic translation initiation factor 5A-2 (157 aa).

Ser2 is modified (N-acetylserine). Phosphoserine is present on Ser2. Thr7 carries the phosphothreonine modification. Position 51 is a hypusine (Lys51). The residue at position 74 (Ser74) is a Phosphoserine. Lys86 is covalently cross-linked (Glycyl lysine isopeptide (Lys-Gly) (interchain with G-Cter in ubiquitin)).

Belongs to the eIF-5A family. As to quaternary structure, homodimer. Binds to 80S ribosomes. Actively translating ribosomes show mutually exclusive binding of eIF5a (HYP2 or ANB1) and EFT1/eEF2. Interacts with DYS1 and LIA1. Post-translationally, lys-51 undergoes hypusination, a unique post-translational modification that consists in the addition of a butylamino group from spermidine to lysine side chain, leading to the formation of the unusual amino acid hypusine. eIF-5As are the only known proteins to undergo this modification, which is essential for their function.

It is found in the cytoplasm. Translation factor that promotes translation elongation and termination, particularly upon ribosome stalling at specific amino acid sequence contexts. Binds between the exit (E) and peptidyl (P) site of the ribosome and promotes rescue of stalled ribosome: specifically required for efficient translation of polyproline-containing peptides as well as other motifs that stall the ribosome. Acts as ribosome quality control (RQC) cofactor by joining the RQC complex to facilitate peptidyl transfer during CAT tailing step. Involved in actin dynamics and cell cycle progression, mRNA decay and probably in a pathway involved in stress response and maintenance of cell wall integrity. This Saccharomyces cerevisiae (strain ATCC 204508 / S288c) (Baker's yeast) protein is Eukaryotic translation initiation factor 5A-2 (ANB1).